We begin with the raw amino-acid sequence, 603 residues long: Serine/threonine-protein kinase PLK1 (603 aa).

Residues Met-1–Pro-35 are disordered. Ser-2 carries the post-translational modification N-acetylserine. Phosphothreonine is present on Thr-6. Low complexity predominate over residues Ala-13–Pro-35. Lys-19 is covalently cross-linked (Glycyl lysine isopeptide (Lys-Gly) (interchain with G-Cter in ubiquitin)). Positions Tyr-53–Phe-305 constitute a Protein kinase domain. Residues Leu-59–Cys-67 and Lys-82 contribute to the ATP site. Phosphoserine is present on Ser-103. Glu-131 lines the ATP pocket. Position 137 is a phosphoserine (Ser-137). The active-site Proton acceptor is Asp-176. Residues Lys-178–Asn-181 and Asp-194 contribute to the ATP site. Positions Asp-194–Glu-221 are activation loop. Position 210 is a phosphothreonine; by AURKA (Thr-210). A Phosphothreonine modification is found at Thr-214. At Ser-269 the chain carries Phosphoserine; by autocatalysis. Ser-335 is subject to Phosphoserine. A D-box that targets the protein for proteasomal degradation in anaphase motif is present at residues Arg-337–Leu-340. Residue Lys-338 forms a Glycyl lysine isopeptide (Lys-Gly) (interchain with G-Cter in SUMO2) linkage. Residues Lys-338–Arg-364 are disordered. A compositionally biased stretch (basic and acidic residues) spans Leu-351–Arg-364. A phosphoserine mark is found at Ser-375 and Ser-450. The region spanning Trp-410 to Glu-488 is the POLO box 1 domain. Lys-492 participates in a covalent cross-link: Glycyl lysine isopeptide (Lys-Gly) (interchain with G-Cter in ubiquitin). A linker region spans residues Ala-493–Arg-507. Thr-498 carries the phosphothreonine modification. The 83-residue stretch at Tyr-510–Ser-592 folds into the POLO box 2 domain. The tract at residues His-538–Lys-540 is important for interaction with phosphorylated proteins.

This sequence belongs to the protein kinase superfamily. Ser/Thr protein kinase family. CDC5/Polo subfamily. Interacts with CEP170. Interacts with EVI5. Interacts with FAM29A. Interacts with SLX4/BTBD12. Interacts with TTDN1. Interacts (via POLO-box domain) with the phosphorylated form of BUB1, CDC25C and CENPU. Interacts with KIF2A. Interacts with CYLD. Part of an astrin (SPAG5)-kinastrin (SKAP) complex containing KNSTRN, SPAG5, PLK1, DYNLL1 and SGO2. Interacts with BIRC6/bruce. Interacts with CDK1-phosphorylated FRY; this interaction occurs in mitotic cells, but not in interphase cells. FRY interaction facilitates AURKA-mediated PLK1 phosphorylation. Interacts with CDK1-phosphorylated DCTN6 during mitotic prometaphase; the interaction facilitates recruitment to kinetochores. Interacts with CEP68; the interaction phosphorylates CEP68. Interacts (via POLO-box domain) with DCTN1. Interacts with CEP20 in later G1, S, G2 and M phases of the cell cycle; this interaction recruits PLK1 to centrosomes, a step required for S phase progression. Interacts with KLHL22. Interacts (via POLO box domains) with NEDD9/HEF1 (via C-terminus). Interacts with FIRRM (via N-terminus region); required for maintaining, but not activating, PLK1 kinase activity. Interacts with FZR1. Interacts with SKA3; the interaction promotes the stability of PLK1; the interaction promotes the stability of PLK1. Interacts with the MTMR3:MTMR4 heterooligomer; brings CEP55 and PLK1 together during early mitosis, regulating the phosphorylation of CEP55 by PLK1 and its recruitment to the midbody where it can mediate cell abscission. In terms of processing, catalytic activity is enhanced by phosphorylation of Thr-210. Phosphorylation at Thr-210 is first detected on centrosomes in the G2 phase of the cell cycle, peaks in prometaphase and gradually disappears from centrosomes during anaphase. Dephosphorylation at Thr-210 at centrosomes is probably mediated by protein phosphatase 1C (PP1C), via interaction with PPP1R12A/MYPT1. Autophosphorylation and phosphorylation of Ser-137 may not be significant for the activation of PLK1 during mitosis, but may enhance catalytic activity during recovery after DNA damage checkpoint. Phosphorylated in vitro by STK10. Post-translationally, ubiquitinated by the anaphase promoting complex/cyclosome (APC/C) in anaphase and following DNA damage, leading to its degradation by the proteasome. Ubiquitination is mediated via its interaction with FZR1/CDH1. Ubiquitination and subsequent degradation prevents entry into mitosis and is essential to maintain an efficient G2 DNA damage checkpoint. Monoubiquitination at Lys-492 by the BCR(KLHL22) ubiquitin ligase complex does not lead to degradation: it promotes PLK1 dissociation from phosphoreceptor proteins and subsequent removal from kinetochores, allowing silencing of the spindle assembly checkpoint (SAC) and chromosome segregation. In terms of tissue distribution, placenta and colon.

The protein resides in the nucleus. Its subcellular location is the chromosome. It is found in the centromere. The protein localises to the kinetochore. It localises to the cytoplasm. The protein resides in the cytoskeleton. Its subcellular location is the microtubule organizing center. It is found in the centrosome. The protein localises to the spindle. It localises to the midbody. It carries out the reaction L-seryl-[protein] + ATP = O-phospho-L-seryl-[protein] + ADP + H(+). It catalyses the reaction L-threonyl-[protein] + ATP = O-phospho-L-threonyl-[protein] + ADP + H(+). Activated by phosphorylation of Thr-210 by AURKA; phosphorylation by AURKA is enhanced by BORA. Once activated, activity is stimulated by binding target proteins. Binding of target proteins has no effect on the non-activated kinase. Several inhibitors targeting PLKs are currently in development and are under investigation in a growing number of clinical trials, such as BI 2536, an ATP-competitive PLK1 inhibitor or BI 6727, a dihydropteridinone that specifically inhibits the catalytic activity of PLK1. Functionally, serine/threonine-protein kinase that performs several important functions throughout M phase of the cell cycle, including the regulation of centrosome maturation and spindle assembly, the removal of cohesins from chromosome arms, the inactivation of anaphase-promoting complex/cyclosome (APC/C) inhibitors, and the regulation of mitotic exit and cytokinesis. Polo-like kinase proteins act by binding and phosphorylating proteins that are already phosphorylated on a specific motif recognized by the POLO box domains. Phosphorylates BORA, BUB1B/BUBR1, CCNB1, CDC25C, CEP55, ECT2, ERCC6L, FBXO5/EMI1, FOXM1, KIF20A/MKLP2, CENPU, NEDD1, NINL, NPM1, NUDC, PKMYT1/MYT1, KIZ, MRE11, PPP1R12A/MYPT1, POLQ, PRC1, RACGAP1/CYK4, RAD51, RHNO1, SGO1, STAG2/SA2, TEX14, TOPORS, p73/TP73, TPT1, WEE1 and HNRNPU. Plays a key role in centrosome functions and the assembly of bipolar spindles by phosphorylating KIZ, NEDD1 and NINL. NEDD1 phosphorylation promotes subsequent targeting of the gamma-tubulin ring complex (gTuRC) to the centrosome, an important step for spindle formation. Phosphorylation of NINL component of the centrosome leads to NINL dissociation from other centrosomal proteins. Involved in mitosis exit and cytokinesis by phosphorylating CEP55, ECT2, KIF20A/MKLP2, CENPU, PRC1 and RACGAP1. Recruited at the central spindle by phosphorylating and docking PRC1 and KIF20A/MKLP2; creates its own docking sites on PRC1 and KIF20A/MKLP2 by mediating phosphorylation of sites subsequently recognized by the POLO box domains. Phosphorylates RACGAP1, thereby creating a docking site for the Rho GTP exchange factor ECT2 that is essential for the cleavage furrow formation. Promotes the central spindle recruitment of ECT2. Plays a central role in G2/M transition of mitotic cell cycle by phosphorylating CCNB1, CDC25C, FOXM1, CENPU, PKMYT1/MYT1, PPP1R12A/MYPT1 and WEE1. Part of a regulatory circuit that promotes the activation of CDK1 by phosphorylating the positive regulator CDC25C and inhibiting the negative regulators WEE1 and PKMYT1/MYT1. Also acts by mediating phosphorylation of cyclin-B1 (CCNB1) on centrosomes in prophase. Phosphorylates FOXM1, a key mitotic transcription regulator, leading to enhance FOXM1 transcriptional activity. Involved in kinetochore functions and sister chromatid cohesion by phosphorylating BUB1B/BUBR1, FBXO5/EMI1 and STAG2/SA2. PLK1 is high on non-attached kinetochores suggesting a role of PLK1 in kinetochore attachment or in spindle assembly checkpoint (SAC) regulation. Required for kinetochore localization of BUB1B. Regulates the dissociation of cohesin from chromosomes by phosphorylating cohesin subunits such as STAG2/SA2. Phosphorylates SGO1: required for spindle pole localization of isoform 3 of SGO1 and plays a role in regulating its centriole cohesion function. Mediates phosphorylation of FBXO5/EMI1, a negative regulator of the APC/C complex during prophase, leading to FBXO5/EMI1 ubiquitination and degradation by the proteasome. Acts as a negative regulator of p53 family members: phosphorylates TOPORS, leading to inhibit the sumoylation of p53/TP53 and simultaneously enhance the ubiquitination and subsequent degradation of p53/TP53. Phosphorylates the transactivation domain of the transcription factor p73/TP73, leading to inhibit p73/TP73-mediated transcriptional activation and pro-apoptotic functions. Phosphorylates BORA, and thereby promotes the degradation of BORA. Contributes to the regulation of AURKA function. Also required for recovery after DNA damage checkpoint and entry into mitosis. Phosphorylates MISP, leading to stabilization of cortical and astral microtubule attachments required for proper spindle positioning. Together with MEIKIN, acts as a regulator of kinetochore function during meiosis I: required both for mono-orientation of kinetochores on sister chromosomes and protection of centromeric cohesin from separase-mediated cleavage. Phosphorylates CEP68 and is required for its degradation. Regulates nuclear envelope breakdown during prophase by phosphorylating DCTN1 resulting in its localization in the nuclear envelope. Phosphorylates the heat shock transcription factor HSF1, promoting HSF1 nuclear translocation upon heat shock. Phosphorylates HSF1 also in the early mitotic period; this phosphorylation regulates HSF1 localization to the spindle pole, the recruitment of the SCF(BTRC) ubiquitin ligase complex induicing HSF1 degradation, and hence mitotic progression. Regulates mitotic progression by phosphorylating RIOK2. Through the phosphorylation of DZIP1 regulates the localization during mitosis of the BBSome, a ciliary protein complex involved in cilium biogenesis. Regulates DNA repair during mitosis by mediating phosphorylation of POLQ and RHNO1, thereby promoting POLQ recruitment to DNA damage sites. Phosphorylates ATXN10 which may play a role in the regulation of cytokinesis and may stimulate the proteasome-mediated degradation of ATXN10. In Homo sapiens (Human), this protein is Serine/threonine-protein kinase PLK1 (PLK1).